We begin with the raw amino-acid sequence, 722 residues long: Probable acyl-activating enzyme 16, chloroplastic (722 aa).

A chloroplast-targeting transit peptide spans 1 to 47; that stretch reads MASTSLGASILVSHCSSAPEFQVSGMRLVFGYKAFGCRTSRRGFRVR.

Belongs to the ATP-dependent AMP-binding enzyme family.

The protein localises to the plastid. The protein resides in the chloroplast. Its function is as follows. May be involved in the activation of fatty acids to acyl-carrier-protein. The sequence is that of Probable acyl-activating enzyme 16, chloroplastic (AAE16) from Arabidopsis thaliana (Mouse-ear cress).